The primary structure comprises 275 residues: Elongation factor Ts (275 aa).

The interval 76 to 79 is involved in Mg(2+) ion dislocation from EF-Tu; it reads TDFV.

This sequence belongs to the EF-Ts family.

It localises to the cytoplasm. Associates with the EF-Tu.GDP complex and induces the exchange of GDP to GTP. It remains bound to the aminoacyl-tRNA.EF-Tu.GTP complex up to the GTP hydrolysis stage on the ribosome. The polypeptide is Elongation factor Ts (Rhodococcus opacus (strain B4)).